The following is a 29-amino-acid chain: Cyclotide vibi-A (29 aa).

The segment at residues 1–29 (GLPVCGETCFGGTCNTPGCSCSYPICTRN) is a cross-link (cyclopeptide (Gly-Asn)). 3 disulfides stabilise this stretch: Cys5-Cys19, Cys9-Cys21, and Cys14-Cys26.

This is a cyclic peptide.

Probably participates in a plant defense mechanism. The sequence is that of Cyclotide vibi-A from Viola biflora (Yellow wood violet).